Here is a 115-residue protein sequence, read N- to C-terminus: NAD(P)H-quinone oxidoreductase subunit M (115 aa).

It belongs to the complex I NdhM subunit family. As to quaternary structure, NDH-1 can be composed of about 15 different subunits; different subcomplexes with different compositions have been identified which probably have different functions.

It is found in the cellular thylakoid membrane. It carries out the reaction a plastoquinone + NADH + (n+1) H(+)(in) = a plastoquinol + NAD(+) + n H(+)(out). The enzyme catalyses a plastoquinone + NADPH + (n+1) H(+)(in) = a plastoquinol + NADP(+) + n H(+)(out). Functionally, NDH-1 shuttles electrons from an unknown electron donor, via FMN and iron-sulfur (Fe-S) centers, to quinones in the respiratory and/or the photosynthetic chain. The immediate electron acceptor for the enzyme in this species is believed to be plastoquinone. Couples the redox reaction to proton translocation, and thus conserves the redox energy in a proton gradient. Cyanobacterial NDH-1 also plays a role in inorganic carbon-concentration. This is NAD(P)H-quinone oxidoreductase subunit M from Prochlorococcus marinus (strain AS9601).